The primary structure comprises 748 residues: CCR4-NOT transcription complex subunit 10-A (748 aa).

Residues 1 to 17 (MAADKAGEQGAEKHEDS) show a composition bias toward basic and acidic residues. Disordered regions lie at residues 1-25 (MAAD…GISD), 184-205 (SNNK…EPFA), 483-524 (KQEN…PPSS), and 605-635 (VSLG…QMPQ). A compositionally biased stretch (low complexity) spans 185–200 (NNKNGKNNETNSNANN). Composition is skewed to polar residues over residues 487 to 509 (GSKT…VCSN) and 605 to 615 (VSLGVSSNEQE).

Belongs to the CNOT10 family. Component of the CCR4-NOT complex. cnot10 and cnot11 form a subcomplex docked to the cnot1 scaffold.

The protein localises to the cytoplasm. It is found in the nucleus. Component of the CCR4-NOT complex which is one of the major cellular mRNA deadenylases and is linked to various cellular processes including bulk mRNA degradation, miRNA-mediated repression, translational repression during translational initiation and general transcription regulation. Additional complex functions may be a consequence of its influence on mRNA expression. Is not required for association of CNOT7 to the CCR4-NOT complex. The chain is CCR4-NOT transcription complex subunit 10-A (cnot10-a) from Xenopus laevis (African clawed frog).